A 180-amino-acid polypeptide reads, in one-letter code: Inorganic pyrophosphatase (180 aa).

Substrate is bound by residues Lys-30, Arg-44, and Tyr-56. Residues Asp-66, Asp-71, and Asp-103 each coordinate Mg(2+). Tyr-142 serves as a coordination point for substrate.

The protein belongs to the PPase family. As to quaternary structure, homohexamer. It depends on Mg(2+) as a cofactor.

It is found in the cytoplasm. It catalyses the reaction diphosphate + H2O = 2 phosphate + H(+). Catalyzes the hydrolysis of inorganic pyrophosphate (PPi) forming two phosphate ions. The protein is Inorganic pyrophosphatase of Buchnera aphidicola subsp. Schizaphis graminum (strain Sg).